Consider the following 602-residue polypeptide: Glutamine--fructose-6-phosphate aminotransferase [isomerizing] (602 aa).

Catalysis depends on C2, which acts as the Nucleophile; for GATase activity. The region spanning 2-222 (CGIFGIIFAE…DGEYGYITAG (221 aa)) is the Glutamine amidotransferase type-2 domain. SIS domains follow at residues 284 to 422 (VANA…ALGH) and 452 to 592 (LAKR…PDKP). Residue K597 is the For Fru-6P isomerization activity of the active site.

In terms of assembly, homodimer.

It is found in the cytoplasm. It catalyses the reaction D-fructose 6-phosphate + L-glutamine = D-glucosamine 6-phosphate + L-glutamate. Catalyzes the first step in hexosamine metabolism, converting fructose-6P into glucosamine-6P using glutamine as a nitrogen source. This Pyrobaculum aerophilum (strain ATCC 51768 / DSM 7523 / JCM 9630 / CIP 104966 / NBRC 100827 / IM2) protein is Glutamine--fructose-6-phosphate aminotransferase [isomerizing].